Reading from the N-terminus, the 871-residue chain is Speckle targeted PIP5K1A-regulated poly(A) polymerase (871 aa).

The Matrin-type zinc-finger motif lies at 16–46 (FRCCLCHITTANQPSLDAHLGGRKHRHLVEL). Positions 56 to 128 (RSVFVSGFPR…RRLRVRPREQ (73 aa)) constitute an RRM domain. Position 205 (Ser-205) interacts with ATP. Mg(2+) contacts are provided by Asp-216 and Asp-218. UTP-binding residues include Asp-216 and Asp-218. Residues 252-321 (QALACTPASP…QEDQGDGDQG (70 aa)) form a disordered region. A compositionally biased stretch (pro residues) spans 259-269 (ASPPDSQPPAS). Asn-392 contributes to the ATP binding site. 4 residues coordinate UTP: Asn-392, Arg-414, Tyr-432, and His-547. A PAP-associated domain is found at 489–547 (LSSLLAQFFSCVSCWDLRGSLLSLREGQALSVAGGLPSNLSEGLRLGPMNLQDPFDLSH). Positions 596–871 (SSPSSILSAT…LPQALRNLLK (276 aa)) are KA1; binds the bulging loops of U6 snRNA but is dispensable for terminal uridylyltransferase activity. The segment at 636-684 (GTKRLRSEGGGPGEPPQGGTSKRAKLDGQKKSCEEGPEEQQGCAGEHGE) is disordered. The segment covering 659–669 (AKLDGQKKSCE) has biased composition (basic and acidic residues). Ser-748 carries the post-translational modification Phosphoserine.

This sequence belongs to the DNA polymerase type-B-like family. As to quaternary structure, associates with the cleavage and polyadenylation specificity factor (CPSF) complex. Interacts with CPSF1 and CPSF3; the interaction is direct. Interacts with PIP5K1A. Mg(2+) is required as a cofactor. The cofactor is Mn(2+). Phosphorylated by CK1 in the proline-rich (Pro-rich) region.

It localises to the nucleus. It is found in the nucleolus. The protein resides in the nucleus speckle. It catalyses the reaction RNA(n) + UTP = RNA(n)-3'-uridine ribonucleotide + diphosphate. The catalysed reaction is RNA(n) + ATP = RNA(n)-3'-adenine ribonucleotide + diphosphate. Adenylyltransferase activity is specifically phosphatidylinositol 4,5-bisphosphate (PtdIns(4,5)P2). Its function is as follows. Poly(A) polymerase that creates the 3'-poly(A) tail of specific pre-mRNAs. Localizes to nuclear speckles together with PIP5K1A and mediates polyadenylation of a select set of mRNAs, such as HMOX1. In addition to polyadenylation, it is also required for the 3'-end cleavage of pre-mRNAs: binds to the 3'UTR of targeted pre-mRNAs and promotes the recruitment and assembly of the CPSF complex on the 3'UTR of pre-mRNAs. In addition to adenylyltransferase activity, also has uridylyltransferase activity. However, the ATP ratio is higher than UTP in cells, suggesting that it functions primarily as a poly(A) polymerase. Acts as a specific terminal uridylyltransferase for U6 snRNA in vitro: responsible for a controlled elongation reaction that results in the restoration of the four 3'-terminal UMP-residues found in newly transcribed U6 snRNA. Not involved in replication-dependent histone mRNA degradation. The polypeptide is Speckle targeted PIP5K1A-regulated poly(A) polymerase (TUT1) (Bos taurus (Bovine)).